The sequence spans 456 residues: NADPH-ferredoxin reductase FprA (456 aa).

Serine 14, glutamate 40, leucine 48, and valine 84 together coordinate FAD. Residues arginine 110, 155-158 (NGNV), 199-200 (RR), and glutamate 211 each bind NADP(+). FAD-binding positions include tryptophan 359 and 366–368 (GVI). NADP(+) is bound at residue glycine 366.

Belongs to the ferredoxin--NADP reductase type 1 family. Monomer. FAD is required as a cofactor.

It carries out the reaction 2 reduced [2Fe-2S]-[ferredoxin] + NADP(+) + H(+) = 2 oxidized [2Fe-2S]-[ferredoxin] + NADPH. In terms of biological role, may serve as electron transfer protein and supply electrons to P450 systems. The polypeptide is NADPH-ferredoxin reductase FprA (fprA) (Mycobacterium tuberculosis (strain CDC 1551 / Oshkosh)).